Consider the following 1081-residue polypeptide: Probable sucrose-phosphate synthase 2 (1081 aa).

Disordered stretches follow at residues 116-152, 239-267, and 760-780; these read EQGR…PRGN, EPTE…EDLG, and IKRQ…GDVP. The segment covering 256 to 267 has biased composition (acidic residues); sequence EPEEEEEEEDLG.

It belongs to the glycosyltransferase 1 family. In terms of assembly, homodimer or homotetramer.

The enzyme catalyses beta-D-fructose 6-phosphate + UDP-alpha-D-glucose = sucrose 6(F)-phosphate + UDP + H(+). Its pathway is glycan biosynthesis; sucrose biosynthesis; sucrose from D-fructose 6-phosphate and UDP-alpha-D-glucose: step 1/2. Activity is regulated by phosphorylation and moderated by concentration of metabolites and light. Its function is as follows. Plays a role in photosynthetic sucrose synthesis by catalyzing the rate-limiting step of sucrose biosynthesis from UDP-glucose and fructose- 6-phosphate. Involved in the regulation of carbon partitioning in the leaves of plants. May regulate the synthesis of sucrose and therefore play a major role as a limiting factor in the export of photoassimilates out of the leaf. Plays a role for sucrose availability that is essential for plant growth and fiber elongation. The polypeptide is Probable sucrose-phosphate synthase 2 (SPS2) (Craterostigma plantagineum (Blue gem)).